The chain runs to 261 residues: MRHPRVAGSFYPANPESLLAMLREYTYPAKDESVIACVSPHAGYVYSGRTAGKVHSLLPDAETFVIVGPNHTGYGLPVAVSTDTWLTPLGEVEVDTEFVEAMPKIITAPDEIAHRYEHSLEVQVPFLQYLHDDFKIVPICLGMQDEETAMEVAEEILTAERETGRKVVVIASSDMHHYLPDEECRRLDSIVIDAILSMDVKKYYETIYRLQASVCGYGCIAVAMYYSKAKGARAELVDYSTSGDVADRSQVVGYAGIVFRV.

It belongs to the MEMO1 family.

The sequence is that of MEMO1 family protein AF_2310 from Archaeoglobus fulgidus (strain ATCC 49558 / DSM 4304 / JCM 9628 / NBRC 100126 / VC-16).